Here is a 228-residue protein sequence, read N- to C-terminus: L-ribulose-5-phosphate 4-epimerase UlaF (228 aa).

Residues 26 to 27, 43 to 44, and 72 to 73 contribute to the substrate site; these read GN, SG, and SS. Residues Asp-74, His-93, and His-95 each coordinate Zn(2+). The active-site Proton donor/acceptor is Asp-118. His-167 lines the Zn(2+) pocket. Tyr-225 acts as the Proton donor/acceptor in catalysis.

This sequence belongs to the aldolase class II family. AraD/FucA subfamily. Zn(2+) is required as a cofactor.

It catalyses the reaction L-ribulose 5-phosphate = D-xylulose 5-phosphate. It participates in cofactor degradation; L-ascorbate degradation; D-xylulose 5-phosphate from L-ascorbate: step 4/4. In terms of biological role, catalyzes the isomerization of L-ribulose 5-phosphate to D-xylulose 5-phosphate. Is involved in the anaerobic L-ascorbate utilization. This chain is L-ribulose-5-phosphate 4-epimerase UlaF, found in Shigella flexneri.